A 26-amino-acid polypeptide reads, in one-letter code: Dermaseptin-J2 (26 aa).

Val26 carries the post-translational modification Valine amide.

In terms of tissue distribution, expressed by the skin glands.

It is found in the secreted. In terms of biological role, has antimicrobial activity. The sequence is that of Dermaseptin-J2 from Phasmahyla jandaia (Jandaia leaf frog).